The following is a 393-amino-acid chain: Inulin fructotransferase [DFA-I-forming] (393 aa).

The enzyme catalyses Produces alpha-D-fructofuranose beta-D-fructofuranose 1,2':2,1'-dianhydride (DFA I) by successively eliminating the diminishing (2-&gt;1)-beta-D-fructan (inulin) chain from the terminal D-fructosyl-D-fructosyl disaccharide.. The polypeptide is Inulin fructotransferase [DFA-I-forming] (Arthrobacter globiformis).